Consider the following 506-residue polypeptide: RNA-splicing ligase RtcB homolog 1 (506 aa).

Mn(2+)-binding residues include aspartate 120, cysteine 123, histidine 228, histidine 260, and histidine 354. 227 to 231 contacts GMP; the sequence is NHYAE. GMP contacts are provided by residues 354-355, 403-406, serine 410, 429-432, and lysine 505; these read HN, GGSM, and HGAG. Histidine 429 (GMP-histidine intermediate) is an active-site residue.

The protein belongs to the RtcB family. Catalytic component of the tRNA-splicing ligase complex. Mn(2+) is required as a cofactor.

The enzyme catalyses a 3'-end 3'-phospho-ribonucleotide-RNA + a 5'-end dephospho-ribonucleoside-RNA + GTP = a ribonucleotidyl-ribonucleotide-RNA + GMP + diphosphate. It catalyses the reaction a 3'-end 2',3'-cyclophospho-ribonucleotide-RNA + a 5'-end dephospho-ribonucleoside-RNA + GTP + H2O = a ribonucleotidyl-ribonucleotide-RNA + GMP + diphosphate + H(+). Catalytic subunit of the tRNA-splicing ligase complex that acts by directly joining spliced tRNA halves to mature-sized tRNAs by incorporating the precursor-derived splice junction phosphate into the mature tRNA as a canonical 3',5'-phosphodiester. May act as an RNA ligase with broad substrate specificity, and may function toward other RNAs. The polypeptide is RNA-splicing ligase RtcB homolog 1 (Culex quinquefasciatus (Southern house mosquito)).